Consider the following 114-residue polypeptide: UPF0145 protein STK_10800 (114 aa).

This sequence belongs to the UPF0145 family.

The polypeptide is UPF0145 protein STK_10800 (Sulfurisphaera tokodaii (strain DSM 16993 / JCM 10545 / NBRC 100140 / 7) (Sulfolobus tokodaii)).